Consider the following 41-residue polypeptide: Large ribosomal subunit protein bL36 (41 aa).

The protein belongs to the bacterial ribosomal protein bL36 family.

The chain is Large ribosomal subunit protein bL36 from Brucella abortus (strain S19).